A 432-amino-acid polypeptide reads, in one-letter code: Adenylosuccinate synthetase (432 aa).

GTP contacts are provided by residues 13–19 (GDEGKGK) and 41–43 (GHT). Asp14 serves as the catalytic Proton acceptor. Residues Asp14 and Gly41 each contribute to the Mg(2+) site. Residues 14 to 17 (DEGK), 39 to 42 (NAGH), Thr131, Arg145, Gln226, Thr241, and Arg305 each bind IMP. His42 acts as the Proton donor in catalysis. Residue 301–307 (SVTGRAR) participates in substrate binding. Residues Arg307, 333–335 (KLD), and 416–418 (STG) contribute to the GTP site.

This sequence belongs to the adenylosuccinate synthetase family. As to quaternary structure, homodimer. Requires Mg(2+) as cofactor.

It localises to the cytoplasm. It catalyses the reaction IMP + L-aspartate + GTP = N(6)-(1,2-dicarboxyethyl)-AMP + GDP + phosphate + 2 H(+). Its pathway is purine metabolism; AMP biosynthesis via de novo pathway; AMP from IMP: step 1/2. In terms of biological role, plays an important role in the de novo pathway of purine nucleotide biosynthesis. Catalyzes the first committed step in the biosynthesis of AMP from IMP. In Neisseria meningitidis serogroup B (strain ATCC BAA-335 / MC58), this protein is Adenylosuccinate synthetase.